We begin with the raw amino-acid sequence, 446 residues long: Alpha-galacturonidase (446 aa).

10–72 lines the NAD(+) pocket; sequence IKIAYIGGGS…GRWRYEAVST (63 aa). A substrate-binding site is contributed by Asn-151. Position 173 (Cys-173) interacts with Mn(2+). Residue His-174 is the Proton donor of the active site. His-210 is a Mn(2+) binding site.

The protein belongs to the glycosyl hydrolase 4 family. In terms of assembly, homotetramer. NAD(+) is required as a cofactor. The cofactor is Mn(2+).

It carries out the reaction [(1-&gt;4)-alpha-D-galacturonosyl](n) + H2O = alpha-D-galacturonate + [(1-&gt;4)-alpha-D-galacturonosyl](n-1). In terms of biological role, alpha-galacturonidase able to catalyze the hydrolysis of the chromogenic substrate p-nitrophenyl-alpha-D-galacturonic acid (pNPalphaGalUA), and of the probable natural substrate alpha-1,4-di-galacturonate (GalUA(2)). Can neither hydrolyze pNPbetaGalUA, nor the stereoisomeric pNPalphaGlcUA. Does not display alpha- or beta-glucosidase activity as it fails to hydrolyze melibiose, raffinose, lactose and the chromogenic analogs, pNPalphaGal and pNPbetaGal. Cannot use the following compounds as substrates: pNP-N-acetyl-alpha- and beta-D-galactosaminide, pNP-N-acetyl-alpha- and beta-D-glucosaminide, pNP-alpha-L- and beta-L-arabinopyranoside, pNP-alpha- and beta-D-glucuronide, pNP-alpha- and beta-D-glucopyranoside, pNP-alpha- and beta-D-glucopyranoside 6-phosphate, pNP-alpha-D-galactopyranoside 6-phosphate and oNP-beta-D-galactopyranoside 6-phosphate. In Bacillus subtilis (strain 168), this protein is Alpha-galacturonidase (lplD).